A 78-amino-acid polypeptide reads, in one-letter code: RNA-binding protein KhpA (78 aa).

A KH domain is found at 29–78 (TIIYELTVAKPDIGKIIGKEGRTIKAIRTLLVSVASRNNVKVSLEIMEDK).

Belongs to the KhpA RNA-binding protein family.

It localises to the cytoplasm. In terms of biological role, a probable RNA-binding protein. In Chlamydia caviae (strain ATCC VR-813 / DSM 19441 / 03DC25 / GPIC) (Chlamydophila caviae), this protein is RNA-binding protein KhpA.